We begin with the raw amino-acid sequence, 115 residues long: MNHIQTFAEEQLKPDIPEFRPGDTVRVHVKVVEGERQRIQVFEGVVIRRRGGGVSETFTVRRVSYGVGVERTFPLHSPRVDRIEVVRLGRVRRARLYYLRKLRGKAARIRERKTK.

The protein belongs to the bacterial ribosomal protein bL19 family.

This protein is located at the 30S-50S ribosomal subunit interface and may play a role in the structure and function of the aminoacyl-tRNA binding site. The polypeptide is Large ribosomal subunit protein bL19 (Desulforudis audaxviator (strain MP104C)).